The sequence spans 108 residues: MNMTVDPRRKEKINRYKAPKNQGQSGGANEDMMPDYMNILGMIFSMCGLMMKLKWCAWFALYCSCISFASSRASDDAKQVLSSFMLSVSAVVMSYLQNPAAMTPPWAS.

The interval 1-29 (MNMTVDPRRKEKINRYKAPKNQGQSGGAN) is disordered. A helical transmembrane segment spans residues 80 to 96 (VLSSFMLSVSAVVMSYL).

Belongs to the Asterix family.

Its subcellular location is the membrane. The chain is Protein Asterix from Drosophila melanogaster (Fruit fly).